The following is a 205-amino-acid chain: Phosphoribosyl-dephospho-CoA transferase (205 aa).

Residues Asp-134 and Asp-136 contribute to the active site.

This sequence belongs to the MdcG family.

The enzyme catalyses apo-[malonate decarboxylase ACP] + 2'-(5''-triphospho-alpha-D-ribosyl)-3'-dephospho-CoA = holo-[malonate decarboxylase ACP] + diphosphate. In terms of biological role, transfers 2'-(5-triphosphoribosyl)-3'-dephosphocoenzyme-A to the apo-[acyl-carrier-protein] of the malonate decarboxylase to yield holo-[acyl-carrier-protein]. The polypeptide is Phosphoribosyl-dephospho-CoA transferase (Klebsiella pneumoniae subsp. pneumoniae (strain ATCC 700721 / MGH 78578)).